The following is a 172-amino-acid chain: 18.6 kDa class III heat shock protein (172 aa).

The interval 29–54 (RRSAGDHAHHAAHGHGQHRISGIGGG) is disordered. A sHSP domain is found at 48–172 (ISGIGGGAPV…KTKSVQVTIA (125 aa)).

This sequence belongs to the small heat shock protein (HSP20) family. May form oligomeric structures.

The protein localises to the cytoplasm. The chain is 18.6 kDa class III heat shock protein (HSP18.6) from Oryza sativa subsp. japonica (Rice).